The chain runs to 308 residues: Protoheme IX farnesyltransferase (308 aa).

Transmembrane regions (helical) follow at residues 31–51 (VGIV…AFYF), 60–80 (LDIV…SCVI), 110–130 (ALWF…MTNL), 131–151 (TAAG…TMWS), 157–177 (VNTI…WTAV), 185–205 (AWVL…ALAI), 232–252 (IIIW…LGLP), 253–273 (IVIL…VGYR), and 285–305 (FVYS…FTLF).

It belongs to the UbiA prenyltransferase family. Protoheme IX farnesyltransferase subfamily. In terms of assembly, interacts with CtaA.

It localises to the cell membrane. The enzyme catalyses heme b + (2E,6E)-farnesyl diphosphate + H2O = Fe(II)-heme o + diphosphate. The protein operates within porphyrin-containing compound metabolism; heme O biosynthesis; heme O from protoheme: step 1/1. Functionally, converts heme B (protoheme IX) to heme O by substitution of the vinyl group on carbon 2 of heme B porphyrin ring with a hydroxyethyl farnesyl side group. In Bacillus licheniformis (strain ATCC 14580 / DSM 13 / JCM 2505 / CCUG 7422 / NBRC 12200 / NCIMB 9375 / NCTC 10341 / NRRL NRS-1264 / Gibson 46), this protein is Protoheme IX farnesyltransferase.